The chain runs to 352 residues: MSATAAITTRHDWTLAEVRALFEQPFNDLLFQAQSVHRQHFDPNRVQVSTLLSIKTGACPEDCKYCPQSGHYNTGLDKEKLMEVEKVLQAAAEAKAIGSTRFCMGAAWKHPSAKDMPYVLKMVEGVKKLGLETCMTLGKLTQEQTQALAEAGLDYYNHNLDTSPEFYGNIITTRTYSERLQTLAYVREAGMKICSGGILGMGESVDDRAGLLIQLANLPEHPESVPINMLVKVKGTPLAEEKDVDPFDFIRTLAVARIMMPKSHVRLSAGREQMNEQMQALAFMAGANSIFYGEKLLTTANPQADKDMALFKRLGIKPEEREEHADEVHQAAIEQALVEQRDSKLFYNAASA.

Positions 44–262 (NRVQVSTLLS…LAVARIMMPK (219 aa)) constitute a Radical SAM core domain. Positions 59, 63, and 66 each coordinate [4Fe-4S] cluster. Positions 103, 134, 194, and 266 each coordinate [2Fe-2S] cluster.

It belongs to the radical SAM superfamily. Biotin synthase family. As to quaternary structure, homodimer. [4Fe-4S] cluster serves as cofactor. [2Fe-2S] cluster is required as a cofactor.

The enzyme catalyses (4R,5S)-dethiobiotin + (sulfur carrier)-SH + 2 reduced [2Fe-2S]-[ferredoxin] + 2 S-adenosyl-L-methionine = (sulfur carrier)-H + biotin + 2 5'-deoxyadenosine + 2 L-methionine + 2 oxidized [2Fe-2S]-[ferredoxin]. Its pathway is cofactor biosynthesis; biotin biosynthesis; biotin from 7,8-diaminononanoate: step 2/2. Functionally, catalyzes the conversion of dethiobiotin (DTB) to biotin by the insertion of a sulfur atom into dethiobiotin via a radical-based mechanism. The chain is Biotin synthase from Ectopseudomonas mendocina (strain ymp) (Pseudomonas mendocina).